A 388-amino-acid polypeptide reads, in one-letter code: Alanine racemase (388 aa).

The active-site Proton acceptor; specific for D-alanine is the Lys44. Position 44 is an N6-(pyridoxal phosphate)lysine (Lys44). Arg142 is a substrate binding site. Tyr273 (proton acceptor; specific for L-alanine) is an active-site residue. Met321 is a substrate binding site.

The protein belongs to the alanine racemase family. Requires pyridoxal 5'-phosphate as cofactor.

It catalyses the reaction L-alanine = D-alanine. It participates in amino-acid biosynthesis; D-alanine biosynthesis; D-alanine from L-alanine: step 1/1. Its function is as follows. Catalyzes the interconversion of L-alanine and D-alanine. May also act on other amino acids. The protein is Alanine racemase (alr) of Mycobacterium ulcerans (strain Agy99).